Reading from the N-terminus, the 267-residue chain is Extensin (267 aa).

Residues 1–267 (MCPAFSIFFN…HTPSPPPPYY (267 aa)) form a disordered region. 13 repeats span residues 18–33 (PPTYTPSPKPPTPKPT), 34–54 (PPTYTPSPKPPASKPPTPKPT), 55–70 (PPTYTPSPKPPTPKPT), 71–91 (PPTYTPSPKPPATKPPTPKPT), 92–107 (PPTYTPSPKPPTPKPT), 108–128 (PPTYTPSPKPPATKPPTPKPT), 129–144 (PPTYTPSPKPPTPKPT), 145–160 (PPTYTPSPKPPTPKPT), 161–179 (PPTYTPSPKPPTHPTPKPT), 180–195 (PPTYTPSPKPPTPKPT), 196–211 (PPTYTPSPKPPTPKPT), 212–232 (PPTYTPSPKPPATKPPTPKPT), and 233–253 (PPTYTPTPKPPATKPPTYTPT). The interval 18 to 253 (PPTYTPSPKP…ATKPPTYTPT (236 aa)) is highly repetitive. Residues 20 to 267 (TYTPSPKPPT…HTPSPPPPYY (248 aa)) show a composition bias toward pro residues. Residues 261–265 (SPPPP) form an extensin repetitive element region.

In terms of processing, hydroxylated on proline residues in the S-P-P-P-P repeat. O-glycosylated on hydroxyprolines. Mainly in the coleoptile node and root tip.

Its subcellular location is the secreted. The protein resides in the primary cell wall. Its function is as follows. Structural component in primary cell wall. In Zea mays (Maize), this protein is Extensin (HRGP).